The chain runs to 345 residues: Putative pyridoxal reductase (345 aa).

The active-site Proton donor is the tyrosine 60.

This sequence belongs to the aldo/keto reductase family.

Its subcellular location is the cytoplasm. The protein resides in the nucleus. The enzyme catalyses pyridoxine + NADP(+) = pyridoxal + NADPH + H(+). Its pathway is cofactor degradation; B6 vitamer degradation; pyridoxal from pyridoxine (dehydrogenase route): step 1/1. Catalyzes the reduction of pyridoxal (PL) with NADPH and oxidation of pyridoxine (PN) with NADP(+). The polypeptide is Putative pyridoxal reductase (Saccharomyces cerevisiae (strain ATCC 204508 / S288c) (Baker's yeast)).